The primary structure comprises 325 residues: Thioredoxin reductase (325 aa).

FAD is bound by residues 10-13 (SGPS), 39-40 (IA), Gln-44, Asn-53, Val-86, Cys-143, Asp-286, and 293-295 (RQA). Cys-140 and Cys-143 are joined by a disulfide.

The protein belongs to the class-II pyridine nucleotide-disulfide oxidoreductase family. As to quaternary structure, homodimer. The cofactor is FAD.

The protein resides in the cytoplasm. The catalysed reaction is [thioredoxin]-dithiol + NADP(+) = [thioredoxin]-disulfide + NADPH + H(+). This chain is Thioredoxin reductase (TRR1), found in Pneumocystis carinii.